The sequence spans 181 residues: ATP synthase subunit delta (181 aa).

This sequence belongs to the ATPase delta chain family. F-type ATPases have 2 components, F(1) - the catalytic core - and F(0) - the membrane proton channel. F(1) has five subunits: alpha(3), beta(3), gamma(1), delta(1), epsilon(1). F(0) has three main subunits: a(1), b(2) and c(10-14). The alpha and beta chains form an alternating ring which encloses part of the gamma chain. F(1) is attached to F(0) by a central stalk formed by the gamma and epsilon chains, while a peripheral stalk is formed by the delta and b chains.

It localises to the cell membrane. Its function is as follows. F(1)F(0) ATP synthase produces ATP from ADP in the presence of a proton or sodium gradient. F-type ATPases consist of two structural domains, F(1) containing the extramembraneous catalytic core and F(0) containing the membrane proton channel, linked together by a central stalk and a peripheral stalk. During catalysis, ATP synthesis in the catalytic domain of F(1) is coupled via a rotary mechanism of the central stalk subunits to proton translocation. This protein is part of the stalk that links CF(0) to CF(1). It either transmits conformational changes from CF(0) to CF(1) or is implicated in proton conduction. In Mycoplasma mycoides subsp. mycoides SC (strain CCUG 32753 / NCTC 10114 / PG1), this protein is ATP synthase subunit delta.